Here is a 57-residue protein sequence, read N- to C-terminus: DNA-directed RNA polymerase subunit Rpo6 (57 aa).

Belongs to the archaeal Rpo6/eukaryotic RPB6 RNA polymerase subunit family. As to quaternary structure, part of the RNA polymerase complex.

It localises to the cytoplasm. The protein resides in the chromosome. It carries out the reaction RNA(n) + a ribonucleoside 5'-triphosphate = RNA(n+1) + diphosphate. Functionally, DNA-dependent RNA polymerase (RNAP) catalyzes the transcription of DNA into RNA using the four ribonucleoside triphosphates as substrates. This is DNA-directed RNA polymerase subunit Rpo6 from Thermococcus kodakarensis (strain ATCC BAA-918 / JCM 12380 / KOD1) (Pyrococcus kodakaraensis (strain KOD1)).